The primary structure comprises 498 residues: Trehalose-6-phosphate synthase (498 aa).

Arginine 28 provides a ligand contact to D-glucose 6-phosphate. UDP-alpha-D-glucose is bound at residue 48-49; the sequence is GG. Tyrosine 106 and aspartate 160 together coordinate D-glucose 6-phosphate. UDP-alpha-D-glucose contacts are provided by arginine 302 and lysine 307. Arginine 340 is a binding site for D-glucose 6-phosphate. 405-409 contributes to the UDP-alpha-D-glucose binding site; it reads LVAKE.

Belongs to the glycosyltransferase 20 family. As to quaternary structure, homotetramer.

The enzyme catalyses ADP-alpha-D-glucose + D-glucose 6-phosphate = alpha,alpha-trehalose 6-phosphate + ADP + H(+). The catalysed reaction is CDP-alpha-D-glucose + D-glucose 6-phosphate = alpha,alpha-trehalose 6-phosphate + CDP + H(+). It catalyses the reaction GDP-alpha-D-glucose + D-glucose 6-phosphate = alpha,alpha-trehalose 6-phosphate + GDP + H(+). It carries out the reaction TDP-alpha-D-glucose + D-glucose 6-phosphate = 5-methyl-UDP + alpha,alpha-trehalose 6-phosphate + H(+). The enzyme catalyses D-glucose 6-phosphate + UDP-alpha-D-glucose = alpha,alpha-trehalose 6-phosphate + UDP + H(+). It functions in the pathway glycan biosynthesis; trehalose biosynthesis. Probably involved in the osmoprotection via the biosynthesis of trehalose and in the production of glycogen and alpha-glucan via the TreS-Pep2 branch involved in the biosynthesis of maltose-1-phosphate (M1P). Catalyzes the transfer of glucose from UDP-glucose (UDP-Glc) to D-glucose 6-phosphate (Glc-6-P) to form trehalose-6-phosphate. Probably also able to use ADP-Glc, CDP-Glc, GDP-Glc and TDP-Glc as glucosyl donors. In Mycobacterium leprae (strain TN), this protein is Trehalose-6-phosphate synthase.